The sequence spans 619 residues: DNA mismatch repair protein MutL (619 aa).

The disordered stretch occupies residues 358 to 401 (GGNQFARPSEAREAATRFSITSSREPAASGGSSGGASWPHAQPG).

It belongs to the DNA mismatch repair MutL/HexB family.

Its function is as follows. This protein is involved in the repair of mismatches in DNA. It is required for dam-dependent methyl-directed DNA mismatch repair. May act as a 'molecular matchmaker', a protein that promotes the formation of a stable complex between two or more DNA-binding proteins in an ATP-dependent manner without itself being part of a final effector complex. This is DNA mismatch repair protein MutL from Klebsiella pneumoniae (strain 342).